The following is an 860-amino-acid chain: Leucine--tRNA ligase (860 aa).

The 'HIGH' region motif lies at 42-52; that stretch reads PYPSGRLHMGH. A 'KMSKS' region motif is present at residues 619-623; the sequence is KMSKS. Lys622 is an ATP binding site.

This sequence belongs to the class-I aminoacyl-tRNA synthetase family.

It is found in the cytoplasm. The catalysed reaction is tRNA(Leu) + L-leucine + ATP = L-leucyl-tRNA(Leu) + AMP + diphosphate. The chain is Leucine--tRNA ligase from Histophilus somni (strain 2336) (Haemophilus somnus).